The primary structure comprises 236 residues: Orotidine 5'-phosphate decarboxylase (236 aa).

Residues Asp-11, Lys-33, 60–69 (DLKLHDIPNT), Thr-119, Arg-181, Gln-190, Gly-210, and Arg-211 each bind substrate. Residue Lys-62 is the Proton donor of the active site.

The protein belongs to the OMP decarboxylase family. Type 1 subfamily. As to quaternary structure, homodimer.

The catalysed reaction is orotidine 5'-phosphate + H(+) = UMP + CO2. The protein operates within pyrimidine metabolism; UMP biosynthesis via de novo pathway; UMP from orotate: step 2/2. Catalyzes the decarboxylation of orotidine 5'-monophosphate (OMP) to uridine 5'-monophosphate (UMP). This is Orotidine 5'-phosphate decarboxylase from Cutibacterium acnes (strain DSM 16379 / KPA171202) (Propionibacterium acnes).